A 770-amino-acid polypeptide reads, in one-letter code: Glutamate carboxypeptidase 2 homolog (770 aa).

Residues 1-25 (MPYVGVGAQTVSTSLTGAPMVKAYI) lie on the Cytoplasmic side of the membrane. A helical; Signal-anchor for type II membrane protein transmembrane segment spans residues 26-42 (AIAASLIFVFCIAALGV). At 43-770 (HHSERKFNKF…CVVNTLRDVI (728 aa)) the chain is on the extracellular side. Asn-175 and Asn-337 each carry an N-linked (GlcNAc...) asparagine glycan. Residues 282–597 (SKKELFKGRT…QYWAELAKTF (316 aa)) form a catalytic region. The Zn(2+) site is built by His-387 and Asp-397. N-linked (GlcNAc...) asparagine glycosylation is present at Asn-417. Residue Glu-435 is the Nucleophile of the active site. Zn(2+) is bound by residues Glu-436 and Asp-464. N-linked (GlcNAc...) asparagine glycosylation is found at Asn-469, Asn-546, and Asn-551. His-562 is a binding site for Zn(2+). Residues Asn-579, Asn-606, and Asn-630 are each glycosylated (N-linked (GlcNAc...) asparagine).

This sequence belongs to the peptidase M28 family. M28B subfamily. Zn(2+) serves as cofactor.

The protein resides in the membrane. It carries out the reaction Release of an unsubstituted, C-terminal glutamyl residue, typically from Ac-Asp-Glu or folylpoly-gamma-glutamates.. The polypeptide is Glutamate carboxypeptidase 2 homolog (Caenorhabditis elegans).